The sequence spans 141 residues: ATP synthase F(0) complex subunit C2, mitochondrial (141 aa).

The N-terminal 66 residues, 1–66 (MFACSKFVST…RSFQTSAISR (66 aa)), are a transit peptide targeting the mitochondrion. A helical transmembrane segment spans residues 82 to 102 (VGVAGSGAGIGTVFGSLIIGY). Lys-109 carries the N6,N6,N6-trimethyllysine modification. A helical transmembrane segment spans residues 117–137 (ILGFALSEAMGLFCLMVAFLI).

This sequence belongs to the ATPase C chain family. F-type ATPases have 2 components, CF(1) - the catalytic core - and CF(0) - the membrane proton channel. CF(1) has five subunits: alpha(3), beta(3), gamma(1), delta(1), epsilon(1). CF(0) has three main subunits: a, b and c. Interacts with DNAJC30; interaction is direct. Trimethylated by ATPSCKMT at Lys-109. Methylation is required for proper incorporation of the C subunit into the ATP synthase complex and mitochondrial respiration.

Its subcellular location is the mitochondrion membrane. Mitochondrial membrane ATP synthase (F(1)F(0) ATP synthase or Complex V) produces ATP from ADP in the presence of a proton gradient across the membrane which is generated by electron transport complexes of the respiratory chain. F-type ATPases consist of two structural domains, F(1) - containing the extramembraneous catalytic core and F(0) - containing the membrane proton channel, linked together by a central stalk and a peripheral stalk. During catalysis, ATP synthesis in the catalytic domain of F(1) is coupled via a rotary mechanism of the central stalk subunits to proton translocation. Part of the complex F(0) domain. A homomeric c-ring of probably 10 subunits is part of the complex rotary element. The polypeptide is ATP synthase F(0) complex subunit C2, mitochondrial (Homo sapiens (Human)).